A 427-amino-acid polypeptide reads, in one-letter code: UDP-N-acetylglucosamine 1-carboxyvinyltransferase (427 aa).

22–23 serves as a coordination point for phosphoenolpyruvate; sequence KN. Position 99 (R99) interacts with UDP-N-acetyl-alpha-D-glucosamine. Catalysis depends on C123, which acts as the Proton donor. C123 carries the post-translational modification 2-(S-cysteinyl)pyruvic acid O-phosphothioketal. UDP-N-acetyl-alpha-D-glucosamine-binding positions include 128-132, D313, and I335; that span reads RPIDL.

The protein belongs to the EPSP synthase family. MurA subfamily.

The protein resides in the cytoplasm. It carries out the reaction phosphoenolpyruvate + UDP-N-acetyl-alpha-D-glucosamine = UDP-N-acetyl-3-O-(1-carboxyvinyl)-alpha-D-glucosamine + phosphate. It functions in the pathway cell wall biogenesis; peptidoglycan biosynthesis. Functionally, cell wall formation. Adds enolpyruvyl to UDP-N-acetylglucosamine. This chain is UDP-N-acetylglucosamine 1-carboxyvinyltransferase, found in Sphingopyxis alaskensis (strain DSM 13593 / LMG 18877 / RB2256) (Sphingomonas alaskensis).